A 505-amino-acid chain; its full sequence is Glutamate--tRNA ligase (505 aa).

Residues 12–22 (PSPTGDPHVGT) carry the 'HIGH' region motif. A 'KMSKS' region motif is present at residues 253-257 (KLSKR). Lys256 serves as a coordination point for ATP.

It belongs to the class-I aminoacyl-tRNA synthetase family. Glutamate--tRNA ligase type 1 subfamily. Monomer.

It localises to the cytoplasm. The enzyme catalyses tRNA(Glu) + L-glutamate + ATP = L-glutamyl-tRNA(Glu) + AMP + diphosphate. Its function is as follows. Catalyzes the attachment of glutamate to tRNA(Glu) in a two-step reaction: glutamate is first activated by ATP to form Glu-AMP and then transferred to the acceptor end of tRNA(Glu). In Chlamydia felis (strain Fe/C-56) (Chlamydophila felis), this protein is Glutamate--tRNA ligase.